Reading from the N-terminus, the 455-residue chain is tRNA modification GTPase MnmE (455 aa).

The (6S)-5-formyl-5,6,7,8-tetrahydrofolate site is built by Arg26, Glu86, and Arg125. The region spanning 222–376 (GLKTAIIGRP…VEEKINQIFF (155 aa)) is the TrmE-type G domain. Residue Asn232 coordinates K(+). GTP is bound by residues 232-237 (NVGKSS), 251-257 (TDIAGTT), and 276-279 (DTAG). Ser236 is a binding site for Mg(2+). The K(+) site is built by Thr251, Ile253, and Thr256. Mg(2+) is bound at residue Thr257. Lys455 contacts (6S)-5-formyl-5,6,7,8-tetrahydrofolate.

This sequence belongs to the TRAFAC class TrmE-Era-EngA-EngB-Septin-like GTPase superfamily. TrmE GTPase family. Homodimer. Heterotetramer of two MnmE and two MnmG subunits. K(+) serves as cofactor.

It localises to the cytoplasm. Functionally, exhibits a very high intrinsic GTPase hydrolysis rate. Involved in the addition of a carboxymethylaminomethyl (cmnm) group at the wobble position (U34) of certain tRNAs, forming tRNA-cmnm(5)s(2)U34. The sequence is that of tRNA modification GTPase MnmE from Lactococcus lactis subsp. lactis (strain IL1403) (Streptococcus lactis).